A 539-amino-acid chain; its full sequence is GMP synthase [glutamine-hydrolyzing] (539 aa).

Positions 4-202 constitute a Glutamine amidotransferase type-1 domain; it reads KILILDFGSQ…VLQIAGAKPD (199 aa). Residue cysteine 81 is the Nucleophile of the active site. Active-site residues include histidine 176 and glutamate 178. The region spanning 203–395 is the GMPS ATP-PPase domain; it reads WIMKNHIEEA…LGLPPEMVYR (193 aa). 230-236 lines the ATP pocket; the sequence is SGGVDSS.

As to quaternary structure, homodimer.

It catalyses the reaction XMP + L-glutamine + ATP + H2O = GMP + L-glutamate + AMP + diphosphate + 2 H(+). It functions in the pathway purine metabolism; GMP biosynthesis; GMP from XMP (L-Gln route): step 1/1. Catalyzes the synthesis of GMP from XMP. The sequence is that of GMP synthase [glutamine-hydrolyzing] from Burkholderia vietnamiensis (strain G4 / LMG 22486) (Burkholderia cepacia (strain R1808)).